The sequence spans 252 residues: PF03932 family protein CutC (252 aa).

Belongs to the CutC family.

The protein resides in the cytoplasm. The protein is PF03932 family protein CutC of Serratia proteamaculans (strain 568).